A 192-amino-acid polypeptide reads, in one-letter code: Large ribosomal subunit protein uL3 (192 aa).

Belongs to the universal ribosomal protein uL3 family. In terms of assembly, part of the 50S ribosomal subunit. Forms a cluster with proteins L14 and L19.

Its function is as follows. One of the primary rRNA binding proteins, it binds directly near the 3'-end of the 23S rRNA, where it nucleates assembly of the 50S subunit. In Wolinella succinogenes (strain ATCC 29543 / DSM 1740 / CCUG 13145 / JCM 31913 / LMG 7466 / NCTC 11488 / FDC 602W) (Vibrio succinogenes), this protein is Large ribosomal subunit protein uL3 (rplC).